An 804-amino-acid chain; its full sequence is SH3-containing GRB2-like protein 3-interacting protein 1 (804 aa).

Disordered stretches follow at residues 1–90, 124–181, and 199–254; these read MMEG…EESH, LSPS…GPPL, and IWGS…QSAT. Basic and acidic residues predominate over residues 16 to 34; it reads RKKEKDTDSTGSPDRDGIK. Phosphoserine is present on residues Ser54, Ser80, Ser81, Ser83, Ser125, Ser127, Ser132, and Ser145. Residues Thr156 and Thr158 each carry the phosphothreonine modification. Residue Ser212 is modified to Phosphoserine. Residues 221 to 236 show a composition bias toward pro residues; it reads TGTPPPLPPKNVPATP. Phosphothreonine is present on residues Thr223 and Thr235. Residues Ser241, Ser263, Ser276, Ser292, and Ser295 each carry the phosphoserine modification. Residues 289–309 are compositionally biased toward basic and acidic residues; sequence VHFSDTSPEHVTPELTPREKV. Residues 289–500 are disordered; the sequence is VHFSDTSPEH…LSAATTPTVE (212 aa). A phosphothreonine mark is found at Thr300 and Thr304. The segment covering 322 to 346 has biased composition (pro residues); the sequence is SPAPGPLGPPGPTGPPGPPGPPRNV. Position 348 is a phosphoserine (Ser348). Residues 354–369 are compositionally biased toward basic and acidic residues; it reads EVQKKVAEQTFIKDDY. Ser375 bears the Phosphoserine mark. At Thr386 the chain carries Phosphothreonine. Over residues 413-432 the composition is skewed to low complexity; the sequence is TSGASSPARPATPLLPCSST. Pro residues predominate over residues 433-451; it reads TPPPPPPRPPSRPKLPPGK. 2 stretches are compositionally biased toward low complexity: residues 458–468 and 475–498; these read SRPFSPPIHSS and PLARAESTSSISSTNSLSAATTPT. The residue at position 462 (Ser462) is a Phosphoserine. Residues 535 to 803 form the MHD domain; sequence TLPVAAAFTE…RFAAGKYLAD (269 aa). 4 interaction with DPF motifs-containing proteins regions span residues 537 to 543, 569 to 571, 643 to 646, and 789 to 794; these read PVAAAFT, SFP, TYYN, and SLIKKR. A necessary and sufficient to mediate interaction with CANX region spans residues 625-804; sequence MPNLMTHLKK…FAAGKYLADN (180 aa).

In terms of assembly, interacts with proteins essential or regulating the formation of functional clathrin-coated pits. Interacts with CANX. Interacts with AP2A1. Interacts with EPS15. Interacts with SH3GL3. Interacts with AMPH. Interacts with ITSN1 (via SH3 domains). Interacts with and REPS1.

It localises to the membrane. Its subcellular location is the clathrin-coated pit. Its function is as follows. May function in clathrin-mediated endocytosis. Has both a membrane binding/tubulating activity and the ability to recruit proteins essential to the formation of functional clathrin-coated pits. Has a preference for membranes enriched in phosphatidylserine and phosphoinositides and is required for the endocytosis of the transferrin receptor. May also bind tubulin. May play a role in the regulation of energy homeostasis. This Pongo abelii (Sumatran orangutan) protein is SH3-containing GRB2-like protein 3-interacting protein 1 (SGIP1).